We begin with the raw amino-acid sequence, 581 residues long: Bifunctional lycopene cyclase/phytoene synthase (581 aa).

The interval 1-243 is lycopene beta-cyclase; the sequence is MGFDYALVHL…IVFGQLAFDN (243 aa). Transmembrane regions (helical) follow at residues 3-23, 35-55, 65-85, 120-140, 152-172, 173-193, and 221-241; these read FDYA…LTLL, KVAF…SYLI, HVII…FFVV, LKRL…WFCV, ILIW…QFII, GLPF…LWIV, and IEEA…QLAF. Positions 250–581 are phytoene synthase; sequence AFPHLFPDPS…RVLVAWRTLN (332 aa).

This sequence in the N-terminal section; belongs to the lycopene beta-cyclase family. The protein in the C-terminal section; belongs to the phytoene/squalene synthase family.

The protein localises to the membrane. It carries out the reaction all-trans-lycopene = gamma-carotene. The enzyme catalyses gamma-carotene = all-trans-beta-carotene. It catalyses the reaction 2 (2E,6E,10E)-geranylgeranyl diphosphate = 15-cis-phytoene + 2 diphosphate. The protein operates within carotenoid biosynthesis; beta-carotene biosynthesis. It participates in carotenoid biosynthesis; phytoene biosynthesis; all-trans-phytoene from geranylgeranyl diphosphate: step 1/1. Its function is as follows. Bifunctional enzyme that catalyzes the reactions from geranylgeranyl diphosphate to phytoene (phytoene synthase) and lycopene to beta-carotene via the intermediate gamma-carotene (lycopene cyclase). In Leptosphaeria maculans (strain JN3 / isolate v23.1.3 / race Av1-4-5-6-7-8) (Blackleg fungus), this protein is Bifunctional lycopene cyclase/phytoene synthase.